The following is a 64-amino-acid chain: Putative antitoxin MJ0975 (64 aa).

Belongs to the UPF0165 family.

Functionally, possibly the antitoxin component of a type II toxin-antitoxin (TA) system. Its cognate toxin is VapC2 (Potential). The polypeptide is Putative antitoxin MJ0975 (vapB2) (Methanocaldococcus jannaschii (strain ATCC 43067 / DSM 2661 / JAL-1 / JCM 10045 / NBRC 100440) (Methanococcus jannaschii)).